A 628-amino-acid chain; its full sequence is Kelch-like protein diablo (628 aa).

The disordered stretch occupies residues 1–56 (MGDLPGSTGGGSGPAAAGNASGNSSSAGNTGLGVAGTTGVDRPPSPARLSHTSEKH). The segment covering 14–29 (PAAAGNASGNSSSAGN) has biased composition (low complexity). In terms of domain architecture, BTB spans 74–141 (CDVVLNVGGR…CYTAHIIVEE (68 aa)). Residues 176–278 (CLGIRAFADT…SPKFLVGTVG (103 aa)) form the BACK domain. Kelch repeat units follow at residues 325 to 371 (VLFA…VLND), 373 to 419 (LYAV…VLDG), 420 to 466 (FLYA…VLGG), 468 to 513 (LYAI…VFNN), 515 to 560 (IYAV…VVNG), and 561 to 607 (QLYA…VMRA).

It functions in the pathway protein modification; protein ubiquitination. In terms of biological role, probable substrate-specific adapter of an E3 ubiquitin-protein ligase complex which mediates the ubiquitination and subsequent proteasomal degradation of target proteins. May have a role in synapse differentiation and growth. The polypeptide is Kelch-like protein diablo (Drosophila persimilis (Fruit fly)).